Reading from the N-terminus, the 195-residue chain is Putative archaetidylserine decarboxylase proenzyme (195 aa).

S159 (schiff-base intermediate with substrate; via pyruvic acid) is an active-site residue. S159 carries the pyruvic acid (Ser); by autocatalysis modification.

The protein belongs to the phosphatidylserine decarboxylase family. PSD-A subfamily. As to quaternary structure, heterodimer of a large membrane-associated beta subunit and a small pyruvoyl-containing alpha subunit. Pyruvate serves as cofactor. Is synthesized initially as an inactive proenzyme. Formation of the active enzyme involves a self-maturation process in which the active site pyruvoyl group is generated from an internal serine residue via an autocatalytic post-translational modification. Two non-identical subunits are generated from the proenzyme in this reaction, and the pyruvate is formed at the N-terminus of the alpha chain, which is derived from the carboxyl end of the proenzyme. The autoendoproteolytic cleavage occurs by a canonical serine protease mechanism, in which the side chain hydroxyl group of the serine supplies its oxygen atom to form the C-terminus of the beta chain, while the remainder of the serine residue undergoes an oxidative deamination to produce ammonia and the pyruvoyl prosthetic group on the alpha chain. During this reaction, the Ser that is part of the protease active site of the proenzyme becomes the pyruvoyl prosthetic group, which constitutes an essential element of the active site of the mature decarboxylase. In terms of processing, is synthesized initially as an inactive proenzyme. Formation of the active enzyme involves a self-maturation process in which the active site pyruvoyl group is generated from an internal serine residue via an autocatalytic post-translational modification. Two non-identical subunits are generated from the proenzyme in this reaction, and the pyruvate is formed at the N-terminus of the alpha chain, which is derived from the carboxyl end of the proenzyme. The post-translation cleavage follows an unusual pathway, termed non-hydrolytic serinolysis, in which the side chain hydroxyl group of the serine supplies its oxygen atom to form the C-terminus of the beta chain, while the remainder of the serine residue undergoes an oxidative deamination to produce ammonia and the pyruvoyl prosthetic group on the alpha chain.

Its subcellular location is the cell membrane. The enzyme catalyses archaetidylserine + H(+) = archaetidylethanolamine + CO2. Catalyzes the formation of archaetidylethanolamine (PtdEtn) from archaetidylserine (PtdSer). The sequence is that of Putative archaetidylserine decarboxylase proenzyme from Archaeoglobus fulgidus (strain ATCC 49558 / DSM 4304 / JCM 9628 / NBRC 100126 / VC-16).